Consider the following 367-residue polypeptide: MCSLPRGFEPQVPEDLERRSLAELREMLKRQERLLRNEKFICKLPDKGKKIFDSFAKLKAAIAECEEVRRKSELCHPVSLDCKLRQKAIAEVDVGTDKAQNSDPILDTSSLVPGCSSVDNIKSSQTSQNQGLGRPTLEGDEETSEVEYSVNKGPASSNRDRVPPSSEASEYHLQHRVSSQAEDTSSSFDNLFIDRLQRITIADQGEQQSENASTKNLTGLSSGTQKKPHYMEVLEMRAKNPVPQLHKFKTNVLPFRQNDSSSHCQKSRSPISSEERRRRDKQHLDDITAARLLPLHHMPTQLLSIEESLALQKQRKQKYEEMQAKLAAQKLAERLNIKMRSYNPEGESSGRYREVRDEDDDWSSDEF.

The stretch at 15–40 (DLERRSLAELREMLKRQERLLRNEKF) forms a coiled coil. Residues 29-68 (KRQERLLRNEKFICKLPDKGKKIFDSFAKLKAAIAECEEV) are important for transcription repressor activity. Polar residues-rich tracts occupy residues 117–131 (SVDN…QNQG), 176–185 (RVSSQAEDTS), and 205–225 (GEQQ…SGTQ). 3 disordered regions span residues 117–185 (SVDN…EDTS), 203–225 (DQGE…SGTQ), and 254–281 (PFRQ…RRDK). An interaction with Pol II region spans residues 226 to 297 (KKPHYMEVLE…TAARLLPLHH (72 aa)). Position 269 is a phosphoserine (S269). An important for transcription repressor activity region spans residues 298–313 (MPTQLLSIEESLALQK). Residues 300 to 329 (TQLLSIEESLALQKQRKQKYEEMQAKLAAQ) are a coiled coil. Positions 314–339 (QRKQKYEEMQAKLAAQKLAERLNIKM) are interaction with Pol II. The interval 335-367 (LNIKMRSYNPEGESSGRYREVRDEDDDWSSDEF) is disordered. The segment covering 357–367 (DEDDDWSSDEF) has biased composition (acidic residues).

This sequence belongs to the GRINL1 family. As to quaternary structure, component of the Pol II(G) complex, which contains the RNA polymerase II (Pol II) core complex subunits and POLR2M isoform 1. Pol II(G) appears to be an abundant form of Pol II. Post-translationally, dephosphorylated at Ser-269 by the PNUTS-PP1 complex, promoting RNA polymerase II transcription pause-release.

The protein resides in the nucleus. In terms of biological role, appears to be a stable component of the Pol II(G) complex form of RNA polymerase II (Pol II). Pol II synthesizes mRNA precursors and many functional non-coding RNAs and is the central component of the basal RNA polymerase II transcription machinery. May play a role in the Mediator complex-dependent regulation of transcription activation. Acts as a negative regulator of transcriptional activation; this repression is relieved by the Mediator complex, which restores Pol II(G) activator-dependent transcription to a level equivalent to that of Pol II. The sequence is that of DNA-directed RNA polymerase II subunit GRINL1A (POLR2M) from Pongo abelii (Sumatran orangutan).